The sequence spans 454 residues: Bifunctional protein GlmU (454 aa).

The interval 1-226 is pyrophosphorylase; it reads MSLEIVILAA…AMEVQGVNDR (226 aa). Residues 8–11, lysine 22, glutamine 73, 78–79, 99–101, glycine 136, glutamate 151, asparagine 166, and asparagine 224 contribute to the UDP-N-acetyl-alpha-D-glucosamine site; these read LAAG, GT, and YGD. Aspartate 101 is a binding site for Mg(2+). A Mg(2+)-binding site is contributed by asparagine 224. Residues 227–247 form a linker region; it reads MQQAQLERHYQRLRAEELMRQ. The segment at 248–454 is N-acetyltransferase; the sequence is GVTLLDPQRL…NWKRPEKIKK (207 aa). Residues arginine 330 and lysine 348 each contribute to the UDP-N-acetyl-alpha-D-glucosamine site. Histidine 360 (proton acceptor) is an active-site residue. Tyrosine 363 and asparagine 374 together coordinate UDP-N-acetyl-alpha-D-glucosamine. Acetyl-CoA contacts are provided by residues alanine 377, 383–384, serine 402, alanine 420, and arginine 437; that span reads NY.

In the N-terminal section; belongs to the N-acetylglucosamine-1-phosphate uridyltransferase family. It in the C-terminal section; belongs to the transferase hexapeptide repeat family. In terms of assembly, homotrimer. The cofactor is Mg(2+).

It is found in the cytoplasm. The enzyme catalyses alpha-D-glucosamine 1-phosphate + acetyl-CoA = N-acetyl-alpha-D-glucosamine 1-phosphate + CoA + H(+). It catalyses the reaction N-acetyl-alpha-D-glucosamine 1-phosphate + UTP + H(+) = UDP-N-acetyl-alpha-D-glucosamine + diphosphate. It participates in nucleotide-sugar biosynthesis; UDP-N-acetyl-alpha-D-glucosamine biosynthesis; N-acetyl-alpha-D-glucosamine 1-phosphate from alpha-D-glucosamine 6-phosphate (route II): step 2/2. It functions in the pathway nucleotide-sugar biosynthesis; UDP-N-acetyl-alpha-D-glucosamine biosynthesis; UDP-N-acetyl-alpha-D-glucosamine from N-acetyl-alpha-D-glucosamine 1-phosphate: step 1/1. The protein operates within bacterial outer membrane biogenesis; LPS lipid A biosynthesis. Functionally, catalyzes the last two sequential reactions in the de novo biosynthetic pathway for UDP-N-acetylglucosamine (UDP-GlcNAc). The C-terminal domain catalyzes the transfer of acetyl group from acetyl coenzyme A to glucosamine-1-phosphate (GlcN-1-P) to produce N-acetylglucosamine-1-phosphate (GlcNAc-1-P), which is converted into UDP-GlcNAc by the transfer of uridine 5-monophosphate (from uridine 5-triphosphate), a reaction catalyzed by the N-terminal domain. In Pseudomonas aeruginosa (strain ATCC 15692 / DSM 22644 / CIP 104116 / JCM 14847 / LMG 12228 / 1C / PRS 101 / PAO1), this protein is Bifunctional protein GlmU.